The following is a 335-amino-acid chain: Adenine deaminase (335 aa).

Zn(2+) is bound by residues H14, H16, and H194. E197 acts as the Proton donor in catalysis. Residue D275 coordinates Zn(2+). D276 provides a ligand contact to substrate.

It belongs to the metallo-dependent hydrolases superfamily. Adenosine and AMP deaminases family. Adenine deaminase type 2 subfamily. It depends on Zn(2+) as a cofactor.

It catalyses the reaction adenine + H2O + H(+) = hypoxanthine + NH4(+). Its function is as follows. Catalyzes the hydrolytic deamination of adenine to hypoxanthine. Plays an important role in the purine salvage pathway and in nitrogen catabolism. This Chlorobium phaeobacteroides (strain BS1) protein is Adenine deaminase.